The sequence spans 374 residues: Erythronate-4-phosphate dehydrogenase (374 aa).

Residues S45 and T67 each coordinate substrate. NAD(+) is bound at residue D147. R208 is a catalytic residue. D232 provides a ligand contact to NAD(+). E237 is a catalytic residue. The active-site Proton donor is H254. G257 is a binding site for NAD(+).

It belongs to the D-isomer specific 2-hydroxyacid dehydrogenase family. PdxB subfamily. Homodimer.

The protein resides in the cytoplasm. It carries out the reaction 4-phospho-D-erythronate + NAD(+) = (R)-3-hydroxy-2-oxo-4-phosphooxybutanoate + NADH + H(+). Its pathway is cofactor biosynthesis; pyridoxine 5'-phosphate biosynthesis; pyridoxine 5'-phosphate from D-erythrose 4-phosphate: step 2/5. Its function is as follows. Catalyzes the oxidation of erythronate-4-phosphate to 3-hydroxy-2-oxo-4-phosphonooxybutanoate. The chain is Erythronate-4-phosphate dehydrogenase from Pseudoalteromonas atlantica (strain T6c / ATCC BAA-1087).